We begin with the raw amino-acid sequence, 250 residues long: Tripartite motif-containing protein 74 (250 aa).

An RING-type zinc finger spans residues 16–57; that stretch reads CPICLEVFKESLMLQCGHSYCKGCLVSLSYHLDTKVRCPMCW. Residues 84–125 form a B box-type zinc finger; the sequence is PEPKVCVHHRNPLSLFCEKDQELICGLCGLLGSHQHHPVTPV. The Zn(2+) site is built by Cys-89, His-92, Cys-111, and His-117. 2 coiled-coil regions span residues 125–169 and 204–235; these read VSTV…NESD and LVAS…FGNE.

The protein belongs to the TRIM/RBCC family.

This Homo sapiens (Human) protein is Tripartite motif-containing protein 74 (TRIM74).